A 444-amino-acid polypeptide reads, in one-letter code: MPSIILPPKPTALQKPHLNLAVIGHVDNGKSTLVGRLLYETGYVDEKAFKEIEEMAKKMGKEDFAFAWILDRFKEERERGVTIEATHVGFETNKLFITIIDLPGHRDFIKNMIVGASQADAALFVISARPGEFETAIGPQGQGREHLFLIRTLGVQQIVVAVNKMDIVNYDQKRYEQIKAEVSKLLKLLGYDPSKIHFIPVSAIKGDNVKTKSSNTPWYNGPTLLEALDTFQPPPRPVDKPLRMPIQDVFTITGAGTVVVGRVETGVLKVGDRVVIVPPAKVGDVRSIETHHMKLEQAQPGDNIGVNVRGISKEDVRRGDVLGKVDNVPTVAEEIVARVVILWHPTAIGPGYAPVMHIHTATVPVQIVELVSKLDPRTGQAVEQKPQFIKQGDVAIVKIKPLKPVVAEKFSEFPALGRFALRDMGRTIAAGQIIEVKPAQVQIK.

Positions 15-236 (KPHLNLAVIG…ALDTFQPPPR (222 aa)) constitute a tr-type G domain. The tract at residues 24–31 (GHVDNGKS) is G1. Residue 24–31 (GHVDNGKS) participates in GTP binding. Mg(2+) is bound at residue serine 31. The segment at 80–84 (GVTIE) is G2. A G3 region spans residues 101–104 (DLPG). GTP-binding positions include 101-105 (DLPGH) and 163-166 (NKMD). The G4 stretch occupies residues 163–166 (NKMD). The G5 stretch occupies residues 202 to 204 (SAI).

The protein belongs to the TRAFAC class translation factor GTPase superfamily. Classic translation factor GTPase family. EF-Tu/EF-1A subfamily.

It is found in the cytoplasm. It carries out the reaction GTP + H2O = GDP + phosphate + H(+). In terms of biological role, GTP hydrolase that promotes the GTP-dependent binding of aminoacyl-tRNA to the A-site of ribosomes during protein biosynthesis. The polypeptide is Elongation factor 1-alpha (Pyrobaculum islandicum (strain DSM 4184 / JCM 9189 / GEO3)).